Consider the following 692-residue polypeptide: 5-taurinomethyluridine-[tRNA] synthase subunit MTO1, mitochondrial (692 aa).

Residues 1–25 (MFYLRGCGRWVAASFTKQQFPLVRL) constitute a mitochondrion transit peptide. Residues 43–48 (GGGHAG), Val155, Ser218, and Gln407 contribute to the FAD site. An N6-methyllysine modification is found at Lys508. Residues 669–692 (AAMNESPKTDQCLRNADRLQERQL) are disordered. The segment covering 683 to 692 (NADRLQERQL) has biased composition (basic and acidic residues).

This sequence belongs to the MnmG family. In terms of assembly, homodimer; forms a dimer in the presence of potassium. Interacts with GTPBP3; forms the GTPBP3-MTO1 complex composed of homodimers of GTPBP3 and MTO1. Requires FAD as cofactor.

The protein localises to the mitochondrion. The catalysed reaction is 5,10-methylenetetrahydrofolate + uridine(34) in tRNA + taurine + GTP + A + H2O = 5-taurinomethyluridine(34) in tRNA + 7,8-dihydrofolate + GDP + AH2 + phosphate + H(+). Its function is as follows. Component of the GTPBP3-MTO1 complex that catalyzes the 5-taurinomethyluridine (taum(5)U) modification at the 34th wobble position (U34) of mitochondrial tRNAs (mt-tRNAs), which plays a role in mt-tRNA decoding and mitochondrial translation. Taum(5)U formation on mammalian mt-tRNA requires the presence of both GTPBP3-mediated GTPase activity and MTO1 catalytic activity. The chain is 5-taurinomethyluridine-[tRNA] synthase subunit MTO1, mitochondrial (MTO1) from Macaca fascicularis (Crab-eating macaque).